The following is a 212-amino-acid chain: Photosynthetic NDH subunit of subcomplex B 5, chloroplastic (212 aa).

The N-terminal 48 residues, 1–48 (MATVTILSPKSIPKVTDSKFGARVSDQIVNVVKCGKSGRRLKLAKLVS), are a transit peptide targeting the chloroplast. 2 consecutive transmembrane segments (helical) span residues 115–135 (FQGL…YFDA) and 136–156 (PGEY…IIEM).

As to quaternary structure, part of the chloroplast NDH complex, composed of a mixture of chloroplast and nucleus encoded subunits. Component of the NDH subcomplex B, at least composed of PnsB1, PnsB2, PnsB3, PnsB4 and PnsB5.

The protein resides in the plastid. The protein localises to the chloroplast membrane. NDH shuttles electrons from NAD(P)H:plastoquinone, via FMN and iron-sulfur (Fe-S) centers, to quinones in the photosynthetic chain and possibly in a chloroplast respiratory chain. The immediate electron acceptor for the enzyme in this species is believed to be plastoquinone. Couples the redox reaction to proton translocation, and thus conserves the redox energy in a proton gradient. This Arabidopsis thaliana (Mouse-ear cress) protein is Photosynthetic NDH subunit of subcomplex B 5, chloroplastic.